Consider the following 371-residue polypeptide: Histidinol-phosphate aminotransferase (371 aa).

Position 229 is an N6-(pyridoxal phosphate)lysine (Lys229).

This sequence belongs to the class-II pyridoxal-phosphate-dependent aminotransferase family. Histidinol-phosphate aminotransferase subfamily. As to quaternary structure, homodimer. Requires pyridoxal 5'-phosphate as cofactor.

The enzyme catalyses L-histidinol phosphate + 2-oxoglutarate = 3-(imidazol-4-yl)-2-oxopropyl phosphate + L-glutamate. The protein operates within amino-acid biosynthesis; L-histidine biosynthesis; L-histidine from 5-phospho-alpha-D-ribose 1-diphosphate: step 7/9. The chain is Histidinol-phosphate aminotransferase from Roseiflexus castenholzii (strain DSM 13941 / HLO8).